The sequence spans 183 residues: Ribonuclease H (183 aa).

In terms of domain architecture, RNase H type-1 spans 2 to 151; it reads SQARFIAFSD…VDQLAQAAAR (150 aa). Residues D11, E57, D79, and D143 each coordinate Mg(2+).

Belongs to the RNase H family. In terms of assembly, monomer. Mg(2+) is required as a cofactor.

It localises to the cytoplasm. It catalyses the reaction Endonucleolytic cleavage to 5'-phosphomonoester.. Endonuclease that specifically degrades the RNA of RNA-DNA hybrids. The polypeptide is Ribonuclease H (Anaeromyxobacter dehalogenans (strain 2CP-1 / ATCC BAA-258)).